Consider the following 345-residue polypeptide: Uroporphyrinogen decarboxylase (345 aa).

Substrate-binding positions include 27–31 (RQAGR), F46, D76, Y152, S207, and H321.

This sequence belongs to the uroporphyrinogen decarboxylase family. In terms of assembly, homodimer.

The protein resides in the cytoplasm. It carries out the reaction uroporphyrinogen III + 4 H(+) = coproporphyrinogen III + 4 CO2. Its pathway is porphyrin-containing compound metabolism; protoporphyrin-IX biosynthesis; coproporphyrinogen-III from 5-aminolevulinate: step 4/4. In terms of biological role, catalyzes the decarboxylation of four acetate groups of uroporphyrinogen-III to yield coproporphyrinogen-III. This is Uroporphyrinogen decarboxylase from Staphylococcus aureus (strain bovine RF122 / ET3-1).